Consider the following 313-residue polypeptide: HPr kinase/phosphorylase (313 aa).

Catalysis depends on residues His140 and Lys161. 155-162 (GNSGAGKS) lines the ATP pocket. Ser162 is a binding site for Mg(2+). Asp179 functions as the Proton acceptor; for phosphorylation activity. Proton donor; for dephosphorylation activity in the catalytic mechanism. Positions 203-212 (IEVRGLGILN) are important for the catalytic mechanism of both phosphorylation and dephosphorylation. Glu204 lines the Mg(2+) pocket. The active site involves Arg246. An important for the catalytic mechanism of dephosphorylation region spans residues 267 to 272 (PVAAGR).

The protein belongs to the HPrK/P family. In terms of assembly, homohexamer. It depends on Mg(2+) as a cofactor.

It carries out the reaction [HPr protein]-L-serine + ATP = [HPr protein]-O-phospho-L-serine + ADP + H(+). It catalyses the reaction [HPr protein]-O-phospho-L-serine + phosphate + H(+) = [HPr protein]-L-serine + diphosphate. Catalyzes the ATP- as well as the pyrophosphate-dependent phosphorylation of a specific serine residue in HPr, a phosphocarrier protein of the phosphoenolpyruvate-dependent sugar phosphotransferase system (PTS). HprK/P also catalyzes the pyrophosphate-producing, inorganic phosphate-dependent dephosphorylation (phosphorolysis) of seryl-phosphorylated HPr (P-Ser-HPr). The polypeptide is HPr kinase/phosphorylase (Aromatoleum aromaticum (strain DSM 19018 / LMG 30748 / EbN1) (Azoarcus sp. (strain EbN1))).